The primary structure comprises 570 residues: MKASQFFISTLKEAPAEAALASHKLMIRAGLIKANASGLYTWMPMGLRVLRKVENVVREEMARAGSVELLMPVVQPAELWQESGRWEFYGKELLRLKDRHDRDFCMGPTCEEVIADIVRKEINSYKQLPKNFYHIQTKFRDEVRPRFGVMRAREFVMKDAYSFHADYASLQTTYDAMYDAYCRIFTRLGLEFRPVAADTGSIGGTGSHEFQVLAESGEDVIAYSDTSDYAANVELAPTLPLKGERTAAQAELVKVHTPNVKTIESLVEFLNIPVEQTLKSIVVEGENEGEIVLLLLRGDHEFNDIKAEKLAGVKSPLTMASPAAIVEQFGANGGSLGPVGFAGKVYADFATEKGADWVIGANEDGYHYTGFNFGRDAAEPEFVDLRNVVEGDESPDGQGRLKLARGIEVGHVFQLRDKYTQAMNVSFLDNNGKSQIMEMGCYGIGITRVVAAAIEQNNDEKGIIWTKAMASFEVVIVPMNYKKSDTVREAADKIYAELLAAGADVLLDDRDERAGVLLNDSELLGIPHRIVIGDRALKEGNVEYAERRDNEAQAIAIGEIVARVTASLNA.

Belongs to the class-II aminoacyl-tRNA synthetase family. ProS type 1 subfamily. In terms of assembly, homodimer.

It is found in the cytoplasm. The catalysed reaction is tRNA(Pro) + L-proline + ATP = L-prolyl-tRNA(Pro) + AMP + diphosphate. Catalyzes the attachment of proline to tRNA(Pro) in a two-step reaction: proline is first activated by ATP to form Pro-AMP and then transferred to the acceptor end of tRNA(Pro). As ProRS can inadvertently accommodate and process non-cognate amino acids such as alanine and cysteine, to avoid such errors it has two additional distinct editing activities against alanine. One activity is designated as 'pretransfer' editing and involves the tRNA(Pro)-independent hydrolysis of activated Ala-AMP. The other activity is designated 'posttransfer' editing and involves deacylation of mischarged Ala-tRNA(Pro). The misacylated Cys-tRNA(Pro) is not edited by ProRS. The protein is Proline--tRNA ligase of Neisseria meningitidis serogroup A / serotype 4A (strain DSM 15465 / Z2491).